The sequence spans 306 residues: MSTTPPRNKFPLPLDAVVERKPAPARTAGLPAVGTPRPAAPTPAPAKPAKPRLPRTAAPAPAPVPASAVEQRASAATAGGGGMASARARAALAARLRAAGIRDERVLSAIATVPRHLFVEPGLASQAYEDAALPIGHQQTISKPSVVARMIELLREGLAADAPLERVLEIGTGCGYQAAVLSQVAREVFSIERIRPLHEQAKANLRPLRVPNLRLHYGDGMLGLPQAAPFSAIILAAAGMEVPEALLEQLAIGGRLIAPVAVMPPAGVPGQTVTQQLLLIERRNRHRFHRTALEAVFFVPLKSGTI.

Residues 1–82 (MSTTPPRNKF…ASAATAGGGG (82 aa)) form a disordered region. The segment covering 38 to 48 (PAAPTPAPAKP) has biased composition (pro residues). Low complexity predominate over residues 54–77 (PRTAAPAPAPVPASAVEQRASAAT). Residue serine 142 is part of the active site.

Belongs to the methyltransferase superfamily. L-isoaspartyl/D-aspartyl protein methyltransferase family.

It is found in the cytoplasm. It catalyses the reaction [protein]-L-isoaspartate + S-adenosyl-L-methionine = [protein]-L-isoaspartate alpha-methyl ester + S-adenosyl-L-homocysteine. Functionally, catalyzes the methyl esterification of L-isoaspartyl residues in peptides and proteins that result from spontaneous decomposition of normal L-aspartyl and L-asparaginyl residues. It plays a role in the repair and/or degradation of damaged proteins. The polypeptide is Protein-L-isoaspartate O-methyltransferase 2 (Cupriavidus necator (strain ATCC 17699 / DSM 428 / KCTC 22496 / NCIMB 10442 / H16 / Stanier 337) (Ralstonia eutropha)).